We begin with the raw amino-acid sequence, 318 residues long: Large ribosomal subunit protein uL10 (318 aa).

The residue at position 24 (tyrosine 24) is a Phosphotyrosine. A Phosphothreonine modification is found at threonine 59. Residue lysine 264 forms a Glycyl lysine isopeptide (Lys-Gly) (interchain with G-Cter in ubiquitin) linkage. The interval 293–318 (TAAPAKVEAKEESEESDEDMGFGLFD) is disordered. Lysine 298 participates in a covalent cross-link: Glycyl lysine isopeptide (Lys-Gly) (interchain with G-Cter in SUMO1); alternate. Residue lysine 298 forms a Glycyl lysine isopeptide (Lys-Gly) (interchain with G-Cter in SUMO2); alternate linkage. The segment covering 303 to 312 (EESEESDEDM) has biased composition (acidic residues). Phosphoserine is present on residues serine 305 and serine 308.

This sequence belongs to the universal ribosomal protein uL10 family. P0 forms a pentameric complex by interaction with dimers of P1 and P2. Identified in a IGF2BP1-dependent mRNP granule complex containing untranslated mRNAs. Interacts with APEX1. Interacts with FMR1. Ubiquitinated at Lys-264 by RNF14 and RNF25 in response to ribosome collisions (ribosome stalling).

Its subcellular location is the nucleus. The protein localises to the cytoplasm. Functionally, ribosomal protein P0 is the functional equivalent of E.coli protein L10. This Bos taurus (Bovine) protein is Large ribosomal subunit protein uL10 (RPLP0).